The primary structure comprises 927 residues: DIS3-like exonuclease 2 (927 aa).

Residues 1–12 are compositionally biased toward basic residues; the sequence is MDLKPNIRRKEK. The segment at 1 to 168 is disordered; it reads MDLKPNIRRK…DTNNATEMVS (168 aa). Residues 13 to 31 show a composition bias toward basic and acidic residues; it reads RNLLKGEAALEKKGSIDRK. Residues 97–106 show a composition bias toward basic residues; that stretch reads VKPKAKKKNS. Over residues 107-152 the composition is skewed to basic and acidic residues; sequence KEKISKSSKQDEHKTDVHKESVSKLSKNLESRNNRDENSAKREKNN. A compositionally biased stretch (polar residues) spans 153-168; sequence SHQVEADTNNATEMVS. Mg(2+) is bound by residues D453 and D462.

It belongs to the RNR ribonuclease family. DIS3L2 subfamily. Mg(2+) is required as a cofactor. Mn(2+) serves as cofactor.

It localises to the cytoplasm. Its subcellular location is the P-body. Its function is as follows. 3'-5'-exoribonuclease that specifically recognizes RNAs polyuridylated at their 3' end and mediates their degradation. Component of an exosome-independent RNA degradation pathway that mediates degradation of cytoplasmic mRNAs that have been deadenylated and subsequently uridylated at their 3'. The chain is DIS3-like exonuclease 2 (dis32) from Schizosaccharomyces pombe (strain 972 / ATCC 24843) (Fission yeast).